We begin with the raw amino-acid sequence, 314 residues long: Methionyl-tRNA formyltransferase (314 aa).

113–116 (SLLP) lines the (6S)-5,6,7,8-tetrahydrofolate pocket.

Belongs to the Fmt family.

It catalyses the reaction L-methionyl-tRNA(fMet) + (6R)-10-formyltetrahydrofolate = N-formyl-L-methionyl-tRNA(fMet) + (6S)-5,6,7,8-tetrahydrofolate + H(+). Functionally, attaches a formyl group to the free amino group of methionyl-tRNA(fMet). The formyl group appears to play a dual role in the initiator identity of N-formylmethionyl-tRNA by promoting its recognition by IF2 and preventing the misappropriation of this tRNA by the elongation apparatus. In Pseudomonas aeruginosa (strain UCBPP-PA14), this protein is Methionyl-tRNA formyltransferase.